The sequence spans 146 residues: Large ribosomal subunit protein uL15 (146 aa).

Residues 1-57 (MKLFELQPAPGSKKLPKRKGRGHGTGNGKTAGRGHKGQNARSGGGVRPGFEGGQMPL) are disordered. A compositionally biased stretch (gly residues) spans 42 to 52 (SGGGVRPGFEG).

It belongs to the universal ribosomal protein uL15 family. In terms of assembly, part of the 50S ribosomal subunit.

Functionally, binds to the 23S rRNA. The sequence is that of Large ribosomal subunit protein uL15 from Acetivibrio thermocellus (strain ATCC 27405 / DSM 1237 / JCM 9322 / NBRC 103400 / NCIMB 10682 / NRRL B-4536 / VPI 7372) (Clostridium thermocellum).